Reading from the N-terminus, the 143-residue chain is Large ribosomal subunit protein uL13 (143 aa).

The protein belongs to the universal ribosomal protein uL13 family. In terms of assembly, part of the 50S ribosomal subunit.

In terms of biological role, this protein is one of the early assembly proteins of the 50S ribosomal subunit, although it is not seen to bind rRNA by itself. It is important during the early stages of 50S assembly. The sequence is that of Large ribosomal subunit protein uL13 from Prochlorococcus marinus (strain MIT 9312).